We begin with the raw amino-acid sequence, 211 residues long: Thiamine-phosphate synthase (211 aa).

4-amino-2-methyl-5-(diphosphooxymethyl)pyrimidine contacts are provided by residues 37 to 41 (QLRIK) and asparagine 69. Mg(2+) is bound by residues aspartate 70 and aspartate 89. 4-amino-2-methyl-5-(diphosphooxymethyl)pyrimidine is bound at residue serine 108. 134–136 (TQT) serves as a coordination point for 2-[(2R,5Z)-2-carboxy-4-methylthiazol-5(2H)-ylidene]ethyl phosphate. Lysine 137 is a 4-amino-2-methyl-5-(diphosphooxymethyl)pyrimidine binding site. 2-[(2R,5Z)-2-carboxy-4-methylthiazol-5(2H)-ylidene]ethyl phosphate is bound by residues glycine 166 and 186–187 (IS).

Belongs to the thiamine-phosphate synthase family. Mg(2+) is required as a cofactor.

It catalyses the reaction 2-[(2R,5Z)-2-carboxy-4-methylthiazol-5(2H)-ylidene]ethyl phosphate + 4-amino-2-methyl-5-(diphosphooxymethyl)pyrimidine + 2 H(+) = thiamine phosphate + CO2 + diphosphate. The catalysed reaction is 2-(2-carboxy-4-methylthiazol-5-yl)ethyl phosphate + 4-amino-2-methyl-5-(diphosphooxymethyl)pyrimidine + 2 H(+) = thiamine phosphate + CO2 + diphosphate. It carries out the reaction 4-methyl-5-(2-phosphooxyethyl)-thiazole + 4-amino-2-methyl-5-(diphosphooxymethyl)pyrimidine + H(+) = thiamine phosphate + diphosphate. It participates in cofactor biosynthesis; thiamine diphosphate biosynthesis; thiamine phosphate from 4-amino-2-methyl-5-diphosphomethylpyrimidine and 4-methyl-5-(2-phosphoethyl)-thiazole: step 1/1. Its function is as follows. Condenses 4-methyl-5-(beta-hydroxyethyl)thiazole monophosphate (THZ-P) and 2-methyl-4-amino-5-hydroxymethyl pyrimidine pyrophosphate (HMP-PP) to form thiamine monophosphate (TMP). The sequence is that of Thiamine-phosphate synthase from Shigella boydii serotype 4 (strain Sb227).